Here is a 413-residue protein sequence, read N- to C-terminus: Acyltransferase mokF (413 aa).

Arginine 93 is a monacolin J binding site. The active-site Acyl-ester intermediate is the serine 96. Residues arginine 193, tyrosine 208, and tyrosine 278 each coordinate monacolin J. A 2-methylbutanoate-binding site is contributed by glycine 386.

The protein belongs to the class-A beta-lactamase family.

The enzyme catalyses monacolin J carboxylate + (S)-2-methylbutanoyl-[2-methylbutanoate polyketide synthase] = lovastatin carboxylate + holo-[2-methylbutanoate polyketide synthase]. The protein operates within polyketide biosynthesis; lovastatin biosynthesis. Its function is as follows. Acyltransferase; part of the gene cluster that mediates the biosynthesis of monakolin K, also known as lovastatin, and which acts as a potent competitive inhibitor of HMG-CoA reductase. Monakolin K biosynthesis is performed in two stages. The first stage is catalyzed by the nonaketide synthase mokA, which belongs to type I polyketide synthases and catalyzes the iterative nine-step formation of the polyketide. This PKS stage is completed by the action of dehydrogenase mokE, which catalyzes the NADPH-dependent reduction of the unsaturated tetra-, penta- and heptaketide intermediates that arise during the mokA-mediated biosynthesis of the nonaketide chain and leads to dihydromonacolin L. Covalently bound dihydromonacolin L is released from mokA by the mokD esterase. Conversion of dihydromonacolin L into monacolin L and then monacolin J is subsequently performed with the participation of molecular oxygen and P450 monoogygenase mokC. Finally, mokF performs the conversion of monacoline J to monacoline K through the addition of the side-chain diketide moiety (2R)-2-methylbutanoate produced by the diketide synthase mokB. This Monascus pilosus (Red mold) protein is Acyltransferase mokF.